We begin with the raw amino-acid sequence, 115 residues long: uncharacterized protein (115 aa).

The disordered stretch occupies residues 1-115 (MGETWFLTPN…ARSPERTPSP (115 aa)). Positions 7–17 (LTPNGQSSPGS) are enriched in polar residues. Low complexity-rich tracts occupy residues 60–70 (ASCAPRATPRR) and 91–107 (SASAPAGPASSAPWPAR).

This is an uncharacterized protein from Human adenovirus C serotype 2 (HAdV-2).